The chain runs to 512 residues: 2-isopropylmalate synthase (512 aa).

In terms of domain architecture, Pyruvate carboxyltransferase spans 5–268; that stretch reads LIIFDTTLRD…DVGIDTQHIV (264 aa). Positions 14, 202, 204, and 239 each coordinate Mn(2+). The regulatory domain stretch occupies residues 394-512; it reads GFVSLAQHSE…SKAERVAAQG (119 aa).

Belongs to the alpha-IPM synthase/homocitrate synthase family. LeuA type 1 subfamily. In terms of assembly, homodimer. Mn(2+) is required as a cofactor.

It is found in the cytoplasm. It carries out the reaction 3-methyl-2-oxobutanoate + acetyl-CoA + H2O = (2S)-2-isopropylmalate + CoA + H(+). Its pathway is amino-acid biosynthesis; L-leucine biosynthesis; L-leucine from 3-methyl-2-oxobutanoate: step 1/4. Functionally, catalyzes the condensation of the acetyl group of acetyl-CoA with 3-methyl-2-oxobutanoate (2-ketoisovalerate) to form 3-carboxy-3-hydroxy-4-methylpentanoate (2-isopropylmalate). This Acidovorax ebreus (strain TPSY) (Diaphorobacter sp. (strain TPSY)) protein is 2-isopropylmalate synthase.